We begin with the raw amino-acid sequence, 304 residues long: Sulfate adenylyltransferase subunit 2 2 (304 aa).

The protein belongs to the PAPS reductase family. CysD subfamily. As to quaternary structure, heterodimer composed of CysD, the smaller subunit, and CysN.

It catalyses the reaction sulfate + ATP + H(+) = adenosine 5'-phosphosulfate + diphosphate. The protein operates within sulfur metabolism; hydrogen sulfide biosynthesis; sulfite from sulfate: step 1/3. In terms of biological role, with CysN forms the ATP sulfurylase (ATPS) that catalyzes the adenylation of sulfate producing adenosine 5'-phosphosulfate (APS) and diphosphate, the first enzymatic step in sulfur assimilation pathway. APS synthesis involves the formation of a high-energy phosphoric-sulfuric acid anhydride bond driven by GTP hydrolysis by CysN coupled to ATP hydrolysis by CysD. This chain is Sulfate adenylyltransferase subunit 2 2, found in Marinobacter nauticus (strain ATCC 700491 / DSM 11845 / VT8) (Marinobacter aquaeolei).